A 455-amino-acid polypeptide reads, in one-letter code: Adenylosuccinate synthetase isozyme 2 (455 aa).

A disordered region spans residues 1 to 25 (MSDSGDAQPQDGGNSSSSRGKSPSV). The segment covering 12-25 (GGNSSSSRGKSPSV) has biased composition (low complexity). GTP contacts are provided by residues 38 to 44 (GDEGKGK) and 66 to 68 (GHT). Asp39 (proton acceptor) is an active-site residue. Mg(2+)-binding residues include Asp39 and Gly66. A substrate-binding site is contributed by Asp39. IMP is bound by residues 39–42 (DEGK), 64–67 (NAGH), Thr161, Arg175, Asn254, Thr269, and Arg333. His67 acts as the Proton donor in catalysis. 329-335 (VTTGRKR) lines the substrate pocket. Residues Arg335, 361 to 363 (KLD), and 443 to 446 (GVGK) each bind GTP.

This sequence belongs to the adenylosuccinate synthetase family. In terms of assembly, homodimer. Requires Mg(2+) as cofactor.

It localises to the cytoplasm. It is found in the mitochondrion. It catalyses the reaction IMP + L-aspartate + GTP = N(6)-(1,2-dicarboxyethyl)-AMP + GDP + phosphate + 2 H(+). Its pathway is purine metabolism; AMP biosynthesis via de novo pathway; AMP from IMP: step 1/2. Inhibited competitively by AMP and IMP and non-competitively by fructose 1,6-bisphosphate. Plays an important role in the de novo pathway and in the salvage pathway of purine nucleotide biosynthesis. Catalyzes the first committed step in the biosynthesis of AMP from IMP. The sequence is that of Adenylosuccinate synthetase isozyme 2 (adss2) from Danio rerio (Zebrafish).